The following is a 62-amino-acid chain: Large ribosomal subunit protein bL28 (62 aa).

A disordered region spans residues 1 to 22 (MAKKCAISGKGPMSGNNVSHAK).

The protein belongs to the bacterial ribosomal protein bL28 family.

The chain is Large ribosomal subunit protein bL28 from Sulfurimonas denitrificans (strain ATCC 33889 / DSM 1251) (Thiomicrospira denitrificans (strain ATCC 33889 / DSM 1251)).